The sequence spans 549 residues: CTP synthase (549 aa).

The segment at 1-272 (MPPKSSTTKH…DAYVVRRMDL (272 aa)) is amidoligase domain. Ser-19 contributes to the CTP binding site. UTP is bound at residue Ser-19. ATP is bound by residues 20–25 (SLGKGL) and Asp-77. Residues Asp-77 and Glu-146 each coordinate Mg(2+). Residues 153 to 155 (DIE), 193 to 198 (KTKPTQ), and Lys-229 contribute to the CTP site. Residues 193–198 (KTKPTQ) and Lys-229 contribute to the UTP site. Positions 301 to 548 (VGKYIDLPDA…VKAAVERKTS (248 aa)) constitute a Glutamine amidotransferase type-1 domain. Residue Gly-360 participates in L-glutamine binding. The Nucleophile; for glutamine hydrolysis role is filled by Cys-387. L-glutamine contacts are provided by residues 388–391 (LGLQ), Glu-411, and Arg-473. Catalysis depends on residues His-521 and Glu-523.

Belongs to the CTP synthase family. In terms of assembly, homotetramer.

The enzyme catalyses UTP + L-glutamine + ATP + H2O = CTP + L-glutamate + ADP + phosphate + 2 H(+). The catalysed reaction is L-glutamine + H2O = L-glutamate + NH4(+). It catalyses the reaction UTP + NH4(+) + ATP = CTP + ADP + phosphate + 2 H(+). The protein operates within pyrimidine metabolism; CTP biosynthesis via de novo pathway; CTP from UDP: step 2/2. Its activity is regulated as follows. Allosterically activated by GTP, when glutamine is the substrate; GTP has no effect on the reaction when ammonia is the substrate. The allosteric effector GTP functions by stabilizing the protein conformation that binds the tetrahedral intermediate(s) formed during glutamine hydrolysis. Inhibited by the product CTP, via allosteric rather than competitive inhibition. Catalyzes the ATP-dependent amination of UTP to CTP with either L-glutamine or ammonia as the source of nitrogen. Regulates intracellular CTP levels through interactions with the four ribonucleotide triphosphates. The sequence is that of CTP synthase from Streptomyces coelicolor (strain ATCC BAA-471 / A3(2) / M145).